Consider the following 273-residue polypeptide: Octanoyltransferase LipM (273 aa).

Residues 32-240 form the BPL/LPL catalytic domain; that stretch reads GEIPPTLRFY…GFSEILNIEL (209 aa). Residue Cys-142 is the Acyl-thioester intermediate of the active site.

It belongs to the octanoyltransferase LipM family. In terms of assembly, monomer.

It carries out the reaction octanoyl-[ACP] + L-lysyl-[protein] = N(6)-octanoyl-L-lysyl-[protein] + holo-[ACP] + H(+). The protein operates within protein modification; protein lipoylation via endogenous pathway; protein N(6)-(lipoyl)lysine from octanoyl-[acyl-carrier-protein]. Catalyzes the transfer of endogenously produced octanoic acid from octanoyl-acyl-carrier-protein onto the lipoyl domain of GcvH, an intermediate carrier during protein lipoylation. The sequence is that of Octanoyltransferase LipM from Oceanobacillus iheyensis (strain DSM 14371 / CIP 107618 / JCM 11309 / KCTC 3954 / HTE831).